The primary structure comprises 144 residues: MIKLFFVLAIFSSIISYMNIDPMKSSFFLIFSLLFSMPIISMSMHIWFSYFICLLFLSGIFVILVYFSSLSKINVVKSYMSLFLLLISIIYFSPVSMEYTNYLGLSGFYYSIYWFIFSFILICLLFFMNFSSYFLNFSGALRKV.

5 consecutive transmembrane segments (helical) span residues methionine 1–aspartate 21, serine 25–histidine 45, isoleucine 46–tyrosine 66, valine 75–valine 95, and phenylalanine 108–methionine 128.

Belongs to the complex I subunit 6 family.

It is found in the mitochondrion membrane. It catalyses the reaction a ubiquinone + NADH + 5 H(+)(in) = a ubiquinol + NAD(+) + 4 H(+)(out). In terms of biological role, core subunit of the mitochondrial membrane respiratory chain NADH dehydrogenase (Complex I) that is believed to belong to the minimal assembly required for catalysis. Complex I functions in the transfer of electrons from NADH to the respiratory chain. The immediate electron acceptor for the enzyme is believed to be ubiquinone. The sequence is that of NADH-ubiquinone oxidoreductase chain 6 (nd6) from Caenorhabditis briggsae.